We begin with the raw amino-acid sequence, 654 residues long: Acetyl-coenzyme A synthetase (654 aa).

CoA is bound by residues 191–194 (RRGQ) and threonine 315. ATP-binding positions include 391 to 393 (GEP), 415 to 420 (DTWWQT), aspartate 506, and arginine 521. Residue serine 529 coordinates CoA. Arginine 532 is an ATP binding site. The Mg(2+) site is built by valine 543, histidine 545, and valine 548. Lysine 615 carries the N6-acetyllysine modification.

Belongs to the ATP-dependent AMP-binding enzyme family. Mg(2+) serves as cofactor. In terms of processing, acetylated. Deacetylation by the SIR2-homolog deacetylase activates the enzyme.

It catalyses the reaction acetate + ATP + CoA = acetyl-CoA + AMP + diphosphate. Functionally, catalyzes the conversion of acetate into acetyl-CoA (AcCoA), an essential intermediate at the junction of anabolic and catabolic pathways. AcsA undergoes a two-step reaction. In the first half reaction, AcsA combines acetate with ATP to form acetyl-adenylate (AcAMP) intermediate. In the second half reaction, it can then transfer the acetyl group from AcAMP to the sulfhydryl group of CoA, forming the product AcCoA. This is Acetyl-coenzyme A synthetase from Gemmatimonas aurantiaca (strain DSM 14586 / JCM 11422 / NBRC 100505 / T-27).